The sequence spans 616 residues: Telomeric repeat-binding factor 2-interacting protein 1 (616 aa).

A BRCT domain is found at 15-98 (FLDPGGQSMR…QQLDPNDYAI (84 aa)). The Myb-like domain maps to 112 to 169 (NQGSGRLGYSSEEDAAILKFIEKRQQDAKGNLVWKEMEKRHVTEHSWQSMKDRFLKHL). The tract at residues 174 to 518 (ADKPTKKSPI…CSHIRETPEE (345 aa)) is disordered. A compositionally biased stretch (low complexity) spans 232-245 (PERASSPPEEPQAA). Positions 246-255 (GQPSQASSND) are enriched in polar residues. Composition is skewed to basic and acidic residues over residues 271–288 (ENPR…EHSS) and 344–358 (RSSR…RDIP). Composition is skewed to polar residues over residues 363-382 (EQSS…SDSG) and 397-415 (NANS…ASTP). Residues 431 to 444 (EDSDVMDDSEECEN) are compositionally biased toward acidic residues. Residues 468–480 (REPESQAEHHEET) are compositionally biased toward basic and acidic residues. Positions 597 to 613 (SKFGEEEVTRRKSFLAT) match the Nuclear localization signal motif.

Belongs to the RAP1 family. In terms of assembly, homodimer. Component of the shelterin complex (telosome). Interacts with terf2; the interaction is direct.

Its subcellular location is the nucleus. The protein resides in the chromosome. The protein localises to the telomere. Its function is as follows. Acts both as a regulator of telomere function and as a transcription regulator. Involved in the regulation of telomere length and protection as a component of the shelterin complex (telosome). Does not bind DNA directly: recruited to telomeric double-stranded 5'-TTAGGG-3' repeats via its interaction with terf2. Independently of its function in telomeres, also acts as a transcription regulator: recruited to extratelomeric 5'-TTAGGG-3' sites via its association with terf2 or other factors, and regulates gene expression. The protein is Telomeric repeat-binding factor 2-interacting protein 1 (terf2ip) of Danio rerio (Zebrafish).